The sequence spans 129 residues: Small ribosomal subunit protein uS9 (129 aa).

The tract at residues 110–129 (VERKKYGKKKARKSFQFSKR) is disordered. Residues 114–129 (KYGKKKARKSFQFSKR) show a composition bias toward basic residues.

The protein belongs to the universal ribosomal protein uS9 family.

This chain is Small ribosomal subunit protein uS9, found in Chlorobaculum parvum (strain DSM 263 / NCIMB 8327) (Chlorobium vibrioforme subsp. thiosulfatophilum).